The sequence spans 290 residues: Type II restriction enzyme MjaIII (290 aa).

This sequence belongs to the DpnII type II restriction endonuclease family.

The enzyme catalyses Endonucleolytic cleavage of DNA to give specific double-stranded fragments with terminal 5'-phosphates.. In terms of biological role, a P subtype restriction enzyme that recognizes the double-stranded sequence 5'-GATC-3'; the cleavage site is unknown. The polypeptide is Type II restriction enzyme MjaIII (mjaIIIR) (Methanocaldococcus jannaschii (strain ATCC 43067 / DSM 2661 / JAL-1 / JCM 10045 / NBRC 100440) (Methanococcus jannaschii)).